We begin with the raw amino-acid sequence, 779 residues long: Protein phosphatase 1 regulatory subunit 21 (779 aa).

2 coiled-coil regions span residues 2 to 212 (AATA…QAAL) and 556 to 614 (TESR…ETVQ). 2 disordered regions span residues 85-105 (ETRG…SQEQ) and 612-637 (TVQE…QREP). A compositionally biased stretch (low complexity) spans 96-105 (ESSSQLSQEQ). A compositionally biased stretch (basic and acidic residues) spans 624-637 (EQKEETTEKSQREP). Residues 693–739 (AECRALAKRLSLAEKSKESLTEELKLASQSISRLQDELMTTKRSYED) are a coiled coil. Residues 760–779 (EEIDTLKMTSKGNSKKNKTR) are disordered.

Component of the FERRY complex.

It localises to the early endosome. Functionally, component of the FERRY complex (Five-subunit Endosomal Rab5 and RNA/ribosome intermediary). The FERRY complex directly interacts with mRNAs and RAB5A, and functions as a RAB5A effector involved in the localization and the distribution of specific mRNAs most likely by mediating their endosomal transport. The complex recruits mRNAs and ribosomes to early endosomes through direct mRNA-interaction. Putative regulator of protein phosphatase 1 (PP1) activity. May play a role in the endosomal sorting process or in endosome maturation pathway. The polypeptide is Protein phosphatase 1 regulatory subunit 21 (PPP1R21) (Gallus gallus (Chicken)).